We begin with the raw amino-acid sequence, 139 residues long: METDCNPMELSGVSGFEEEAELNGFEGTDMKDMRLEAEAVVNDVLFAVNTMFVSKTLRCADDVAYINVETRERNRYCLELTEAGLRVVGYAFDQVDDHLQTPYHETVYSLLDTLSPAYREAFGNALLQRLEALKREGQS.

The required for PRKAR2A interaction; contributes to a protective effect against H(2)O(2)-induced apoptosis stretch occupies residues 41-45; sequence VNDVL. The tract at residues 115-139 is interaction with GSK3B and acts as a GSK3B inhibitor; it reads SPAYREAFGNALLQRLEALKREGQS.

The protein belongs to the GSKIP family. As to quaternary structure, forms a complex composed of PRKAR2A or PRKAR2B, GSK3B and GSKIP through GSKIP interaction; facilitates PKA-induced phosphorylation of GSK3B leading to GSK3B inactivation; recruits DNM1L through GSK3B for PKA-mediated phosphorylation of DNM1L; promotes beta-catenin degradation through GSK3B-induced phosphorylation of beta-catenin; stabilizes beta-catenin and enhances Wnt-induced signaling through PKA-induced phosphorylation of beta-catenin. Interacts with GSK3B; induces GSK3B-mediated phosphorylation of GSKIP and inhibits GSK3B kinase activity. In terms of processing, phosphorylated by GSK3B.

Its subcellular location is the cytoplasm. It localises to the nucleus. A-kinase anchoring protein for GSK3B and PKA that regulates or facilitates their kinase activity towards their targets. The ternary complex enhances Wnt-induced signaling by facilitating the GSK3B- and PKA-induced phosphorylation of beta-catenin leading to beta-catenin degradation and stabilization respectively. Upon cAMP activation, the ternary complex contributes to neuroprotection against oxidative stress-induced apoptosis by facilitating the PKA-induced phosphorylation of DML1 and PKA-induced inactivation of GSK3B. During neurite outgrowth promotes neuron proliferation; while increases beta-catenin-induced transcriptional activity through GSK3B kinase activity inhibition, reduces N-cadherin level to promote cell cycle progression. May play a role in cleft palate formation and is required for postnatal life through modulation of the activity of GSK3B during development. The sequence is that of GSK3B-interacting protein from Bos taurus (Bovine).